Consider the following 352-residue polypeptide: Schlafen-like protein 4 (352 aa).

An SLFN-like fold region spans residues 87-235 (FEYQSNFSEV…SDKVYQISSG (149 aa)). The helical transmembrane segment at 326-343 (IQNIGWIFFGTALSCCIY) threads the bilayer.

It belongs to the Schlafen family. In terms of assembly, component of the PUCH (precursor of 21U RNA 5'-end cleavage holoenzyme) complex; consisting of tofu-1, tofu-2 and either slfl-3 or slfl-4.

The protein resides in the membrane. Component of the trimeric PUCH (precursor of 21U RNA 5'-end cleavage holoenzyme) complex, that acts as an endoribonuclease processing the 5'-end of precursor Piwi-interacting RNAs (piRNAs). The PUCH complex consists of tofu-1, tofu-2 and either slfl-3 or slfl-4, where tofu-2 exhibits endoribonuclease activity. PUCH-mediated processing strictly requires a 7-methyl-G cap (m7 G-cap) and an uracil at position three (U3). PUCH also exhibits a strict bias for piRNA precursors with an A or G at position 1. Mature piRNA production is enhanced by the interaction of PUCH with the PETISCO complex, which is stabilizing piRNA precursors and allows their processing by PUCH. The polypeptide is Schlafen-like protein 4 (Caenorhabditis elegans).